The following is a 198-amino-acid chain: 3-isopropylmalate dehydratase small subunit (198 aa).

The protein belongs to the LeuD family. LeuD type 1 subfamily. As to quaternary structure, heterodimer of LeuC and LeuD.

It carries out the reaction (2R,3S)-3-isopropylmalate = (2S)-2-isopropylmalate. Its pathway is amino-acid biosynthesis; L-leucine biosynthesis; L-leucine from 3-methyl-2-oxobutanoate: step 2/4. Functionally, catalyzes the isomerization between 2-isopropylmalate and 3-isopropylmalate, via the formation of 2-isopropylmaleate. In Mycobacterium marinum (strain ATCC BAA-535 / M), this protein is 3-isopropylmalate dehydratase small subunit.